The following is a 422-amino-acid chain: Putative FBD-associated F-box protein At1g55030 (422 aa).

The F-box domain maps to 8–60 (TDMISQLPEPLILQILGSLPTKVAITTSVLSKQWQSHWKMMPKLEFDSFLRRL). 3 LRR repeats span residues 132–153 (TLET…VYLK), 154–175 (SLKT…INLL), and 180–201 (NLQD…TIAV). The 50-residue stretch at 342 to 391 (EWNQPKNVPECLHHLEKFIWEGYKWKREEIEVAKYILKNTNRLKRAIFSL) folds into the FBD domain.

The polypeptide is Putative FBD-associated F-box protein At1g55030 (Arabidopsis thaliana (Mouse-ear cress)).